Here is an 884-residue protein sequence, read N- to C-terminus: Protein P (884 aa).

The terminal protein domain (TP) stretch occupies residues 1–184; sequence MHPFSRLFRN…GKPYSWEHRQ (184 aa). Residues 185–387 form a spacer region; that stretch reads LVQHNGQQHK…YCIHHIVSSL (203 aa). 2 disordered regions span residues 218–241 and 299–345; these read PSEP…QKST and RNSG…DFSS. Polar residues-rich tracts occupy residues 222 to 241 and 323 to 332; these read VSVS…QKST and YSSNSTSQRY. Residues 388 to 729 are polymerase/reverse transcriptase domain (RT); sequence DDWGPCTVTG…YEELWPVVRQ (342 aa). The 242-residue stretch at 398–639 folds into the Reverse transcriptase domain; the sequence is DVTIKSPRTP…NHLHFMGYVI (242 aa). Mg(2+) contacts are provided by Asp-470, Asp-590, and Asp-591.

The protein belongs to the hepadnaviridae P protein family.

The catalysed reaction is DNA(n) + a 2'-deoxyribonucleoside 5'-triphosphate = DNA(n+1) + diphosphate. It carries out the reaction Endonucleolytic cleavage to 5'-phosphomonoester.. Activated by host HSP70 and HSP40 in vitro to be able to bind the epsilon loop of the pgRNA. Because deletion of the RNase H region renders the protein partly chaperone-independent, the chaperones may be needed indirectly to relieve occlusion of the RNA-binding site by this domain. Inhibited by several reverse-transcriptase inhibitors: Lamivudine, Adefovir and Entecavir. Functionally, multifunctional enzyme that converts the viral RNA genome into dsDNA in viral cytoplasmic capsids. This enzyme displays a DNA polymerase activity that can copy either DNA or RNA templates, and a ribonuclease H (RNase H) activity that cleaves the RNA strand of RNA-DNA heteroduplexes in a partially processive 3'- to 5'-endonucleasic mode. Neo-synthesized pregenomic RNA (pgRNA) are encapsidated together with the P protein, and reverse-transcribed inside the nucleocapsid. Initiation of reverse-transcription occurs first by binding the epsilon loop on the pgRNA genome, and is initiated by protein priming, thereby the 5'-end of (-)DNA is covalently linked to P protein. Partial (+)DNA is synthesized from the (-)DNA template and generates the relaxed circular DNA (RC-DNA) genome. After budding and infection, the RC-DNA migrates in the nucleus, and is converted into a plasmid-like covalently closed circular DNA (cccDNA). The activity of P protein does not seem to be necessary for cccDNA generation, and is presumably released from (+)DNA by host nuclear DNA repair machinery. This chain is Protein P, found in Marmota monax (Woodchuck).